A 146-amino-acid polypeptide reads, in one-letter code: Hemoglobin subunit beta (146 aa).

Valine 1 is subject to N-acetylvaline. The Globin domain maps to histidine 2 to histidine 146. Threonine 12 is subject to Phosphothreonine. Serine 44 is subject to Phosphoserine. Lysine 59 is subject to N6-acetyllysine. Histidine 63 is a heme b binding site. The residue at position 82 (lysine 82) is an N6-acetyllysine. Residue histidine 92 coordinates heme b. S-nitrosocysteine is present on cysteine 93. The residue at position 144 (lysine 144) is an N6-acetyllysine.

It belongs to the globin family. As to quaternary structure, heterotetramer of two alpha chains and two beta chains. In terms of tissue distribution, red blood cells.

Functionally, involved in oxygen transport from the lung to the various peripheral tissues. In Cephalopachus bancanus (Western tarsier), this protein is Hemoglobin subunit beta (HBB).